Consider the following 454-residue polypeptide: Ornithine aminotransferase (454 aa).

The pyridoxal 5'-phosphate site is built by glycine 124, threonine 125, and glutamine 267. Lysine 293 is modified (N6-(pyridoxal phosphate)lysine). Position 321 (threonine 321) interacts with pyridoxal 5'-phosphate.

Belongs to the class-III pyridoxal-phosphate-dependent aminotransferase family. Homotetramer; dimer of dimers. Requires pyridoxal 5'-phosphate as cofactor.

It carries out the reaction L-ornithine + 2-oxoglutarate = L-glutamate 5-semialdehyde + L-glutamate. The catalysed reaction is L-lysine + 2-oxoglutarate = (S)-2-amino-6-oxohexanoate + L-glutamate. In terms of biological role, catalyzes the conversion of L-ornithine and 2-oxoglutarate to L-glutamate semialdehyde and L-glutamate. L-ornithine is the best substrate, but the enzyme also shows good activity toward L-lysine, and low activity toward D-ornithine, D-lysine, 5-aminovalerate, 6-aminohexanoate and GABA. The enzyme activity is specific for 2-oxoglutarate. This chain is Ornithine aminotransferase, found in Pyrococcus horikoshii (strain ATCC 700860 / DSM 12428 / JCM 9974 / NBRC 100139 / OT-3).